Here is a 344-residue protein sequence, read N- to C-terminus: Angiopoietin-related protein 7 (344 aa).

The signal sequence occupies residues Met-1–Pro-26. Residues Glu-37–Gln-116 are a coiled coil. N-linked (GlcNAc...) asparagine glycosylation is present at Asn-56. A Fibrinogen C-terminal domain is found at Gln-120–Asp-341. Cys-129 and Cys-160 are joined by a disulfide. Residues Asn-251 and Asn-265 are each glycosylated (N-linked (GlcNAc...) asparagine). Cys-283 and Cys-296 are disulfide-bonded.

As to quaternary structure, homotetramer; disulfide-linked.

The protein localises to the secreted. Functionally, has a role in the formation and organization of the extracellular matrix. In the eye, it functions as a mediator of dexamethasone-induced matrix deposition in the trabecular meshwork, the tissue responsible for the outflow of the ocular aqueous humor and for the maintenance of intraocular pressure. Is a negative regulator of angiogenesis in the cornea, and plays a major role in maintaining corneal avascularity and transparency. The polypeptide is Angiopoietin-related protein 7 (ANGPTL7) (Bos taurus (Bovine)).